The sequence spans 251 residues: Triosephosphate isomerase (251 aa).

9 to 11 (NWK) provides a ligand contact to substrate. The active-site Electrophile is the His95. Glu167 acts as the Proton acceptor in catalysis. Substrate-binding positions include Gly173, Ser213, and 234–235 (GG). At Ser213 the chain carries Phosphoserine.

The protein belongs to the triosephosphate isomerase family. In terms of assembly, homodimer.

The protein localises to the cytoplasm. It catalyses the reaction D-glyceraldehyde 3-phosphate = dihydroxyacetone phosphate. It functions in the pathway carbohydrate biosynthesis; gluconeogenesis. It participates in carbohydrate degradation; glycolysis; D-glyceraldehyde 3-phosphate from glycerone phosphate: step 1/1. Its function is as follows. Involved in the gluconeogenesis. Catalyzes stereospecifically the conversion of dihydroxyacetone phosphate (DHAP) to D-glyceraldehyde-3-phosphate (G3P). This Shouchella clausii (strain KSM-K16) (Alkalihalobacillus clausii) protein is Triosephosphate isomerase.